Here is a 3343-residue protein sequence, read N- to C-terminus: MTVEYKRRPTFWEIFKARCSTADLGPISLNWFEELFSEAPPYNTEHPEESEYKPQGHEPQLFKTPQRNPSYHQFASTPIMFKEQSQTLPLDQSPFKELGNVVANSKRKHHSKKKARKDPVVDVASLPLKACPSESPCTPRCTQVAPQRRKPVVSGSLFYTPKLEETPKHISESLGVEVDPDMSWTSSLATPPTLSSTVLIARDEEAHRNAFPADSPASLKSYFSNHNESLKKNDRFIPSVSDSENKSQQEAFSQGLEKMLGDSSSKINRFRDCLRKPIPNVLEDGETAVDTSGEDSFSLCFPKRRTRNLQKTRMGKMKKKIFSETRTDGLSEEARGQADDKNSFALEIEPRDSEPLDPSVTNQKPLYSQSGDISSEAGQCSDSIWSQPDPSGLNGTQTRKIPLLHISFHKQSILEDFIDMKKEGTGSITFPHISSLPEPEKMFSEETLVDKEHEGQHLESLEDSISGKQMVSGTSQTACLSPSIRKSIVKMREPLEETLDTVFSDSMTSSAFTEELDASAGGLEIHTACSQREDSLCPSSVDTGSWPTTLTDTSATVKNAGLITTLKNKRRKFIYSVSDDASHQGKKLQTQRQSELTNLSAPFEASAFEVPFPFTNVDSGIPDSSIKRSNLPNDPEEPSLSLTNSFVTAASKEISYIHALISQDLNDKEAILSEEKPQPYTALEADFLSCLPERSCENDQKSPKVSDRKEKVLVSACRPSGRLAAAVQLSSISFDSQENPLGSHNVTSTLKLTPSPKTPLSKPVVVSRGKMCKMPEKLQCKSCKDNIELSKNIPLGVNEMCVLSENSETPELLPPLEYITEVSSSVKSQFNQNTKIAVVQKDQKDSTFISEVTVHMNSEELFPEKENNFAFQVTNESNKPNIGSTVEFQEEDLSHAKGHSLKNSPMTVDRDLDDEQAGQVLITEDSDSLAVVHDCTKKSRNTIEQHQKGTADKDFKSNSSLYLKSDGNNDYLDKWSEFLDPLMNHKLGGSFRTASNKEIKLSEDNVKKSKMFFKDIEEQYPTSLDCIDTVSTLQLANKKRLSEPHTFDLKSGTTVSTQCHSQSSVSHEDTHTAPQMLSSKQDFHSSHNLTPSQKAEITELSTILEESGSQFEFTQFKNPSHIAQNNTSAVLGNQMAVVRTASEEWKDVDLHLPLNPSSVGQIDHNKKFECLVGVKQSSSHLLEDTCNQNTSCFLPIKEMEFGGFCSALGTKLSVSNEALRKAMKLFSDIENISEEPSTKVGPRGFSSCAHHDSVASVFKIKKQNTDKSFDEKSSKCQVTVQNNKEMTTCILVDENPENYVKNIKQDNNYTGSQRNAYKLENSDVSKSSTSGTVYINKGDSDLPFAAEKGNKYPESCTQYVREENAQIKESVSDLTCLEVMKAEETCHMKSSDKEQLPSDKMEQNMKEFNISFQTASGKNIRVSKESLNKSVNILDQETEDLTVTSDSLNSKILCGINKDKMHISCHKKSINIKKVFEEHFPIGTVSQLPALQQYPEYEIESIKEPTLLSFHTASGKKVKIMQESLDKVKNLFDETQYVRKTTNFGHQESKPLKDREDYKERLTLAYEKIEVTASKCEEMQNFVSKQTEMLPQQNDHMYRQTENLTSNGSSPKVHGNIENKIEKNPRICCICQSSYFVTEDSALACYTGDSRKTCVGESSLSKGKKWLREQSDKLGTRNTIEIQCVKEHTEDFAGNALYEHSLVIIRTEIDTSHVSENQASTLFSDPNVCHSYLSHSSFCHHDDMHNDSGYFLKDKIDSDVQPDMKNTEGNAIFPKISATKEIKLHPQTVNEECVQKLETNASPYANKNIAIDSAMLDLRNCKVGSPVFITTHSQETVRMKEIFTDNCSKIVEQNRESKPDTCQTSCHKALDNSEDFICPSSSGDVCINSPMAIFYPQSEQILQHNQSVSGLKKAATPPVSLETWDTCKSIRGSPQEVHPSRTYGFFSTASGKAVQVSDASLEKARQVFSEIDGDAKQLASMVSLEGNEKSHHSVKRESSVVHNTHGVLSLRKTLPGNVSSFVFSGFSTAGGKLVTVSESALHKVKGMLEEFDLIRTEHTLQHSPTPEDVSKIPPQPCLESRTPEYSVSSKLQKTYNDKSRSPSNYKESGSSGNTQSLEVSPQLSQMERKQETQSVLGTKVSQRKTNILEKKQNLPQNIKIESNKMETFSDVSMKTNVGEYYSKEPENYFETEAVEIAKAFMEDDELTDSEQTHAKCSLFACPQNEALLNSRTRKRGGMAGVAVGQPPIKRSLLNEFDRIIESKGKSLTPSKSTPDGTIKDRRLFTHHMSLEPVTCGPFCSSKERQETQSPHVTSPAQGLQSKEHPSRHSAVGKSSSNPTVSALRSERTRHSVSDKSTKVFVPPFKVKSRFHRDEHFDSKNVNLEGKNQKSADGVSEDGNDSDFPQFNKDLMSSLQNARDLQDIRIKNKERHHLCPQPGSLYLTKSSTLPRISLQAAVGDSVPSACSPKQLYMYGVSKACISVNSKNAEYFQFAIEDHFGKEALCAGKGFRLADGGWLIPSDDGKAGKEEFYRALCDTPGVDPKLISSVWVSNHYRWIVWKLAAMEFAFPKEFANRCLNPERVLLQLKYRYDVEIDNSSRSALKKILERDDTAAKTLVLCVSDIISLSTNVSETSGSKASSEDSNKVDTIELTDGWYAVKAQLDPPLLALVKSGRLTVGQKIITQGAELVGSPDACAPLEAPDSLRLKISANSTRPARWHSKLGFFHDPRPFPLPLSSLFSDGGNVGCVDVIVQRVYPLQWVEKTVSGSYIFRNEREEEKEALRFAEAQQKKLEALFTKVHTELKEHEEDIAQRRVLSRALTRQQVHALQDGAELYAAVQDASDPEHLETCFSEEQLRALNNYRQMLSDKKQARIQSEFRKALEAAEKEEGLSRDVSTVWKLRVTSYKKREKSALLSIWRPSSDLPSLLTEGQRYRIYHLSVSKSKNKFEWPSIQLTATKRTQYQQLPVSSETLLQLYQPRELLPFSKLSDPAFQPPCSEVDVVGVVVSVVKPIGLAPLVYLSDECLHLLVVKFGIDLNEDIKPRVLIAASNLQWRPESTSRVPTLFAGNFSVFSASPKEAHFQERVTNMKHAIENIDTFYKEAEKKLIQVLKGDSPKWSTPNKDPTREPYPASTCSASDLASGGQLPRSSPTDQQSYRSPLSCCTPTGKSTPLAHSAWMAAKSCSGENEIEDPKTCRKKRALDLLSRLPLPPPLSPVCTFVSPAAQKAFQPPRSCGTKYPTPLKKEGPSSPWSRAPFQKASGVSLLDCDSVADEELALLSTQALVPHSVGGSEQVFPSDSTRTEGPSASTEARPANRSKRESLRDCRDDSDGKLAAETVPDYS.

The interval 1–40 is interaction with PALB2; sequence MTVEYKRRPTFWEIFKARCSTADLGPISLNWFEELFSEAP. The tract at residues 40–60 is disordered; sequence PPYNTEHPEESEYKPQGHEPQ. A compositionally biased stretch (basic and acidic residues) spans 45–56; that stretch reads EHPEESEYKPQG. A Phosphoserine modification is found at Ser-70. Residues 348–381 are disordered; the sequence is IEPRDSEPLDPSVTNQKPLYSQSGDISSEAGQCS. Over residues 359 to 381 the composition is skewed to polar residues; sequence SVTNQKPLYSQSGDISSEAGQCS. Phosphoserine occurs at positions 475 and 736. An interaction with NPM1 region spans residues 622–982; the sequence is PDSSIKRSNL…DKWSEFLDPL (361 aa). BRCA2 repeat units follow at residues 984-1018, 1197-1231, 1405-1439, 1503-1537, 1645-1669, 1828-1845, 1939-1973, and 2019-2053; these read NHKL…DIEE, KEME…DIEN, MKEF…QETE, KEPT…ETQY, CYTG…WLRE, FITT…IFTD, PSRT…EIDG, and SSFV…EFDL. The tract at residues 985–2050 is interaction with RAD51; it reads HKLGGSFRTA…LHKVKGMLEE (1066 aa). Disordered regions lie at residues 2059-2138, 2297-2356, and 2377-2407; these read TLQH…VLGT, PFCS…SDKS, and DSKN…PQFN. Ser-2063 is modified (phosphoserine). 2 stretches are compositionally biased toward polar residues: residues 2083 to 2094 and 2101 to 2125; these read PEYSVSSKLQKT and SPSN…QLSQ. The interaction with HSF2BP stretch occupies residues 2233 to 2300; it reads RKRGGMAGVA…EPVTCGPFCS (68 aa). 2 stretches are compositionally biased toward polar residues: residues 2307 to 2320 and 2332 to 2342; these read TQSP…QGLQ and GKSSSNPTVSA. Positions 2313–2475 are interaction with FANCD2; sequence TSPAQGLQSK…SPKQLYMYGV (163 aa). A compositionally biased stretch (basic and acidic residues) spans 2344–2356; that stretch reads RSERTRHSVSDKS. The tract at residues 2411–2762 is interaction with SEM1; sequence MSSLQNARDL…QRVYPLQWVE (352 aa). Positions 2612-2628 match the Nuclear export signal; masked by interaction with SEM1 motif; sequence AAKTLVLCVSDIISLST. The disordered stretch occupies residues 3114-3163; the sequence is DSPKWSTPNKDPTREPYPASTCSASDLASGGQLPRSSPTDQQSYRSPLSC. The span at 3147–3163 shows a compositional bias: polar residues; it reads PRSSPTDQQSYRSPLSC. Position 3222 is a phosphoserine; by CDK1 and CDK2 (Ser-3222). Disordered regions lie at residues 3231–3255 and 3289–3343; these read PPRS…WSRA and VGGS…PDYS. Position 3250 is a phosphoserine (Ser-3250). Polar residues predominate over residues 3295–3310; it reads VFPSDSTRTEGPSAST. Residues 3318 to 3334 show a composition bias toward basic and acidic residues; sequence SKRESLRDCRDDSDGKL.

Monomer and dimer. Interacts with RAD51; regulates RAD51 recruitment and function at sites of DNA repair. Interacts with SEM1, WDR16, USP11, DMC1, ROCK2 and NPM1. Interacts with both nonubiquitinated and monoubiquitinated FANCD2; this complex also includes XRCC3 and phosphorylated FANCG. Part of a BRCA complex containing BRCA1, BRCA2 and PALB2. Component of the homologous recombination repair (HR) complex composed of ERCC5/XPG, BRCA2, PALB2, DSS1 and RAD51. Within the complex, interacts with ERCC5/XPG and PALB2. Interacts directly with PALB2 which may serve as a scaffold for a HR complex containing PALB2, BRCA2, RAD51C, RAD51 and XRCC3. Interacts with BRCA1 only in the presence of PALB2 which serves as the bridging protein. Interacts with POLH; the interaction is direct. Interacts with the TREX-2 complex subunits PCID2 and SEM1. Interacts with HSF2BP and BRME1; the interaction with HSF2BP is direct and allows the formation of a ternary complex. The complex BRME1:HSF2BP:BRCA2 interacts with SPATA22, MEIOB and RAD51. Post-translationally, phosphorylated by ATM upon irradiation-induced DNA damage. Phosphorylation by CHEK1 and CHEK2 regulates interaction with RAD51. Phosphorylation at Ser-3222 by CDK1 and CDK2 is low in S phase when recombination is active, but increases as cells progress towards mitosis; this phosphorylation prevents homologous recombination-dependent repair during S phase and G2 by inhibiting RAD51 binding. In terms of processing, ubiquitinated in the absence of DNA damage; this does not lead to proteasomal degradation. In contrast, ubiquitination in response to DNA damage leads to proteasomal degradation. Highest expression in testis. Also expressed in spleen, skeletal muscle, thymus, mammary gland, heart, ovary, prostate, liver, lung, kidney and brain.

Its subcellular location is the nucleus. The protein localises to the cytoplasm. It is found in the cytoskeleton. The protein resides in the microtubule organizing center. It localises to the centrosome. Involved in double-strand break repair and/or homologous recombination. Binds RAD51 and potentiates recombinational DNA repair by promoting assembly of RAD51 onto single-stranded DNA (ssDNA). Acts by targeting RAD51 to ssDNA over double-stranded DNA, enabling RAD51 to displace replication protein-A (RPA) from ssDNA and stabilizing RAD51-ssDNA filaments by blocking ATP hydrolysis. Part of a PALB2-scaffolded HR complex containing RAD51C and which is thought to play a role in DNA repair by HR. May participate in S phase checkpoint activation. Binds selectively to ssDNA, and to ssDNA in tailed duplexes and replication fork structures. May play a role in the extension step after strand invasion at replication-dependent DNA double-strand breaks; together with PALB2 is involved in both POLH localization at collapsed replication forks and DNA polymerization activity. In concert with NPM1, regulates centrosome duplication. Interacts with the TREX-2 complex (transcription and export complex 2) subunits PCID2 and SEM1, and is required to prevent R-loop-associated DNA damage and thus transcription-associated genomic instability, independently of its known role in homologous recombination. The chain is Breast cancer type 2 susceptibility protein homolog from Rattus norvegicus (Rat).